We begin with the raw amino-acid sequence, 126 residues long: Methylglyoxal synthase (126 aa).

The MGS-like domain occupies 1–126; that stretch reads MEKKIALIAH…LIKGFEGLNT (126 aa). Residues His10, Lys14, 36–39, and 56–57 each bind substrate; these read TGTT and SG. Catalysis depends on Asp62, which acts as the Proton donor/acceptor. His89 is a substrate binding site.

It belongs to the methylglyoxal synthase family.

It carries out the reaction dihydroxyacetone phosphate = methylglyoxal + phosphate. Functionally, catalyzes the formation of methylglyoxal from dihydroxyacetone phosphate. This is Methylglyoxal synthase from Borrelia garinii subsp. bavariensis (strain ATCC BAA-2496 / DSM 23469 / PBi) (Borreliella bavariensis).